We begin with the raw amino-acid sequence, 149 residues long: Transcription factor Atoh7 (149 aa).

Positions arginine 41–leucine 93 constitute a bHLH domain.

As to quaternary structure, forms a heterodimer with TCF3 isoform E47; interaction may be required for DNA-binding in certain situations. Expressed in retinal ganglion cells. Expressed in the cerebellum, trapezoid body, ventral nucleus of the lateral lamniscus and in areas of the auditory hindbrain such as the cochlear nucleus, lateral superior olive and medial nucleus of the trapezoid body. Expressed in the modiolar nerve root and in the cochlear in a small group of bushy neurons within the acoustic nerve. Expressed weakly in the sensory epithelia of the saccule and utricle.

It is found in the nucleus. Its subcellular location is the perikaryon. It localises to the cell projection. The protein resides in the axon. In terms of biological role, transcription factor that binds to DNA at the consensus sequence 5'-CAG[GC]TG-3'. Dimerization with TCF3 isoform E47 may be required in certain situations. Binds to gene promoters and enhancer elements, and thereby regulates a transcriptional program of retinal ganglion cell (RGC) determinant genes. Although the exact mechanism is not certain, retinal transcription regulation by ATOH7 has a role in RGC determination and survival, photoreceptor population development, targeting of RGC axons to the optic nerve and development of the retino-hypothalamic tract. Binds to its own promoter and enhancer sequences, suggesting autoregulation of ATOH7 transcription. Required for retinal circadian rhythm photoentrainment. Plays a role in brainstem auditory signaling and binaural processing. The sequence is that of Transcription factor Atoh7 from Mus musculus (Mouse).